Reading from the N-terminus, the 1137-residue chain is UDP-N-acetylglucosamine transferase subunit ALG13 (1137 aa).

The glycosyltransferase activity stretch occupies residues Met-1–Cys-125. The deubiquitinase activity stretch occupies residues Thr-126 to Val-400. Residues Leu-231 to Lys-352 form the OTU domain. Catalysis depends on Asp-239, which acts as the For deubiquitinase activity. Cys-242 serves as the catalytic Nucleophile; for deubiquitinase activity. His-345 acts as the For deubiquitinase activity in catalysis. Residues Gln-492–Pro-552 form the Tudor domain. 2 disordered regions span residues His-641–Asn-660 and Ile-911–Asp-974. 2 stretches are compositionally biased toward pro residues: residues Leu-918–Ala-946 and Gln-956–Ser-967.

It belongs to the glycosyltransferase 28 family. Forms with ALG14 the active heterodimeric UDP-N-acetylglucosamine transferase complex. As to quaternary structure, not able to interact with ALG14 to form an active UDP-N-acetylglucosamine transferase complex.

It is found in the endoplasmic reticulum membrane. The enzyme catalyses an N-acetyl-alpha-D-glucosaminyl-diphospho-di-trans,poly-cis-dolichol + UDP-N-acetyl-alpha-D-glucosamine = an N,N'-diacetylchitobiosyl-diphospho-di-trans,poly-cis-dolichol + UDP + H(+). The protein operates within protein modification; protein glycosylation. Its function is as follows. Catalytic subunit of the UDP-N-acetylglucosamine transferase complex that operates in the biosynthetic pathway of dolichol-linked oligosaccharides, the glycan precursors employed in protein asparagine (N)-glycosylation. The assembly of dolichol-linked oligosaccharides begins on the cytosolic side of the endoplasmic reticulum membrane and finishes in its lumen. The sequential addition of sugars to dolichol pyrophosphate produces dolichol-linked oligosaccharides containing fourteen sugars, including two GlcNAcs, nine mannoses and three glucoses. Once assembled, the oligosaccharide is transferred from the lipid to nascent proteins by oligosaccharyltransferases. On the cytoplasmic face of the endoplasmic reticulum, the dimeric ALG13/ALG14 complex catalyzes the second step of dolichol pyrophosphate biosynthesis, transferring a beta1,4-linked N-acetylglucosamine (GlcNAc) from UDP-GlcNAc to GlcNAc-pyrophosphatedolichol (Gn-PDol) to produce N,N'-diacetylchitobiosyl diphosphodolichol. N,N'-diacetylchitobiosyl diphosphodolichol is a substrate for ALG1, the following enzyme in the biosynthetic pathway. No glycosyltransferase or deubiquitinase activity is detected for this potential multifunctional enzyme. This Homo sapiens (Human) protein is UDP-N-acetylglucosamine transferase subunit ALG13.